Here is a 275-residue protein sequence, read N- to C-terminus: Leucine-rich repeat-containing protein 3C (275 aa).

A signal peptide spans 1–41 (MRMTSSSFVSYCTPGLCQFMAMLPTAGHLLPLLLVIGTGGT). The LRRNT domain maps to 42 to 79 (VPSPQVPPRGCYVAKEAGERTFRCSQAGLSAVPSGIPN). LRR repeat units lie at residues 80–101 (DTRKLYLDANQLASVPAGAFQH), 104–125 (VLEELDLSHNALAHLSGAAFQG), and 129–150 (TLRHLDLSANQLASVPVEAFVG). Asn-156 is a glycosylation site (N-linked (GlcNAc...) asparagine). An LRRCT domain is found at 160-212 (NPWHCDCALQEVLRQVRLVPGTGTGIVCGSGARPDLVGQEFLLLAGEEELCGS). Residues 225–245 (LLVTMGGWLTLMVAYLVHYVW) traverse the membrane as a helical segment.

The protein belongs to the LRRC3 family.

It localises to the membrane. This Homo sapiens (Human) protein is Leucine-rich repeat-containing protein 3C (LRRC3C).